A 485-amino-acid polypeptide reads, in one-letter code: Glutamyl-tRNA(Gln) amidotransferase subunit A (485 aa).

Residues Lys78 and Ser153 each act as charge relay system in the active site. Ser177 (acyl-ester intermediate) is an active-site residue.

Belongs to the amidase family. GatA subfamily. As to quaternary structure, heterotrimer of A, B and C subunits.

The enzyme catalyses L-glutamyl-tRNA(Gln) + L-glutamine + ATP + H2O = L-glutaminyl-tRNA(Gln) + L-glutamate + ADP + phosphate + H(+). In terms of biological role, allows the formation of correctly charged Gln-tRNA(Gln) through the transamidation of misacylated Glu-tRNA(Gln) in organisms which lack glutaminyl-tRNA synthetase. The reaction takes place in the presence of glutamine and ATP through an activated gamma-phospho-Glu-tRNA(Gln). In Lawsonia intracellularis (strain PHE/MN1-00), this protein is Glutamyl-tRNA(Gln) amidotransferase subunit A.